The chain runs to 360 residues: Phenylalanine--tRNA ligase alpha subunit (360 aa).

E260 contacts Mg(2+).

This sequence belongs to the class-II aminoacyl-tRNA synthetase family. Phe-tRNA synthetase alpha subunit type 1 subfamily. In terms of assembly, tetramer of two alpha and two beta subunits. It depends on Mg(2+) as a cofactor.

The protein localises to the cytoplasm. It catalyses the reaction tRNA(Phe) + L-phenylalanine + ATP = L-phenylalanyl-tRNA(Phe) + AMP + diphosphate + H(+). The polypeptide is Phenylalanine--tRNA ligase alpha subunit (Rhodopseudomonas palustris (strain ATCC BAA-98 / CGA009)).